The chain runs to 198 residues: HTH-type transcriptional regulator BetI (198 aa).

In terms of domain architecture, HTH tetR-type spans 8–68 (PLRRRELIDA…ATMRHLLREL (61 aa)). The H-T-H motif DNA-binding region spans 31–50 (TVAQIAHEAGVSPALAHHYF).

Its pathway is amine and polyamine biosynthesis; betaine biosynthesis via choline pathway [regulation]. Its function is as follows. Repressor involved in the biosynthesis of the osmoprotectant glycine betaine. It represses transcription of the choline transporter BetT and the genes of BetAB involved in the synthesis of glycine betaine. This chain is HTH-type transcriptional regulator BetI, found in Brucella suis biovar 1 (strain 1330).